The chain runs to 256 residues: Trypsin, alkaline B (256 aa).

The first 17 residues, 1–17 (MRLFLALLALGFAAVAA), serve as a signal peptide directing secretion. A propeptide spans 18–24 (VPANPQR) (activation peptide). The Peptidase S1 domain maps to 25–256 (IVGGSTTTIQ…RFANWIRNNS (232 aa)). Cysteine 55 and cysteine 71 are joined by a disulfide. Active-site charge relay system residues include histidine 70 and aspartate 115. 2 cysteine pairs are disulfide-bonded: cysteine 180/cysteine 197 and cysteine 209/cysteine 233. Serine 213 (charge relay system) is an active-site residue.

Belongs to the peptidase S1 family. As to expression, midgut.

Its subcellular location is the secreted. It localises to the extracellular space. It carries out the reaction Preferential cleavage: Arg-|-Xaa, Lys-|-Xaa.. This is Trypsin, alkaline B from Manduca sexta (Tobacco hawkmoth).